We begin with the raw amino-acid sequence, 251 residues long: Ubiquinone/menaquinone biosynthesis C-methyltransferase UbiE (251 aa).

S-adenosyl-L-methionine-binding positions include threonine 74, aspartate 95, and 123–124 (NA).

Belongs to the class I-like SAM-binding methyltransferase superfamily. MenG/UbiE family.

The enzyme catalyses a 2-demethylmenaquinol + S-adenosyl-L-methionine = a menaquinol + S-adenosyl-L-homocysteine + H(+). It catalyses the reaction a 2-methoxy-6-(all-trans-polyprenyl)benzene-1,4-diol + S-adenosyl-L-methionine = a 5-methoxy-2-methyl-3-(all-trans-polyprenyl)benzene-1,4-diol + S-adenosyl-L-homocysteine + H(+). The protein operates within quinol/quinone metabolism; menaquinone biosynthesis; menaquinol from 1,4-dihydroxy-2-naphthoate: step 2/2. Its pathway is cofactor biosynthesis; ubiquinone biosynthesis. Its function is as follows. Methyltransferase required for the conversion of demethylmenaquinol (DMKH2) to menaquinol (MKH2) and the conversion of 2-polyprenyl-6-methoxy-1,4-benzoquinol (DDMQH2) to 2-polyprenyl-3-methyl-6-methoxy-1,4-benzoquinol (DMQH2). The polypeptide is Ubiquinone/menaquinone biosynthesis C-methyltransferase UbiE (Pseudoalteromonas translucida (strain TAC 125)).